The chain runs to 380 residues: Cytochrome b (380 aa).

Helical transmembrane passes span 34–54 (FGSLLALCLATQILTGLLLAM), 78–99 (WLIRNMHANGASFFFICVYLHI), 114–134 (WNTGVLLLLTLMATAFVGYVL), and 179–199 (FFALHFLLPFLIAGLTLIHLT). Residues His84 and His98 each contribute to the heme b site. The heme b site is built by His183 and His197. His202 contributes to the a ubiquinone binding site. The next 4 membrane-spanning stretches (helical) occupy residues 227–247 (LKDILGLMLLLLPLTTLALFS), 289–309 (LGGVLALAASVLVLFLSPLLH), 321–341 (LSQLLFWTLVANLLILTWIGS), and 348–368 (FIIIGQLASTTYFTILLVLFP).

Belongs to the cytochrome b family. As to quaternary structure, the cytochrome bc1 complex contains 11 subunits: 3 respiratory subunits (MT-CYB, CYC1 and UQCRFS1), 2 core proteins (UQCRC1 and UQCRC2) and 6 low-molecular weight proteins (UQCRH/QCR6, UQCRB/QCR7, UQCRQ/QCR8, UQCR10/QCR9, UQCR11/QCR10 and a cleavage product of UQCRFS1). This cytochrome bc1 complex then forms a dimer. Requires heme b as cofactor.

The protein resides in the mitochondrion inner membrane. Component of the ubiquinol-cytochrome c reductase complex (complex III or cytochrome b-c1 complex) that is part of the mitochondrial respiratory chain. The b-c1 complex mediates electron transfer from ubiquinol to cytochrome c. Contributes to the generation of a proton gradient across the mitochondrial membrane that is then used for ATP synthesis. The sequence is that of Cytochrome b (MT-CYB) from Oceanodroma melania (Black storm-petrel).